Consider the following 2467-residue polypeptide: Transcription factor TFIIIB component B'' homolog (2467 aa).

2 disordered regions span residues 1–145 and 159–243; these read MFRR…RYRI and LRKE…VDDG. An interaction with ZBTB43 region spans residues 1 to 301; it reads MFRRARLSVK…TYSSFRKNYY (301 aa). Low complexity predominate over residues 81 to 92; sequence AAESSTLSSASS. Residues 99 to 118 show a composition bias toward polar residues; the sequence is SSTSSLVQPSGSAPSQSRPL. 2 stretches are compositionally biased toward basic and acidic residues: residues 133 to 144 and 177 to 186; these read AKEKQPCSDRYR and RPPDRSKMTM. The stretch at 144-177 forms a coiled coil; the sequence is RIYKARKLREMLKEELRKEKKQWKNKFSTNESQR. The span at 231 to 242 shows a compositional bias: acidic residues; sequence NDNEDVEEEVDD. In terms of domain architecture, Myb-like spans 297-347; sequence RKNYYSKPWSNKETDMFFLAISMVGTDFSMIGQLFPHRARIEIKNKFKREE. The tract at residues 357 to 472 is required for phosphorylation by CSNK2A1; the sequence is AFQEKRPFDF…QEKKRRRNQG (116 aa). 16 disordered regions span residues 380 to 513, 576 to 720, 748 to 844, 866 to 893, 971 to 1200, 1231 to 1270, 1318 to 1388, 1409 to 1448, 1527 to 1561, 1592 to 1706, 1902 to 1926, 1977 to 2014, 2058 to 2083, 2179 to 2206, 2260 to 2290, and 2304 to 2449; these read EEKR…ECNK, SADM…VKAA, PPQT…PATW, LTATASTKDSESDVKDSGRNDTASNAEM, LQEN…SSKI, LGRHETDQGMPLPDALERFSDTNLSKPLPQEQQPLQVKPA, DSDQ…LVPI, LPVRGRLQRPRPNVQKARQRQIVEKGEARDIAKNEGPELQ, KAKPNLGGARRKDEQPGVEKGRTDESTALTAEDHL, IHSE…RASK, IVSKEQSNRDAAVEEEAVEETLPTR, IQRETEGDDSKAVELEDKSHAPVTAAETKEEEQSQCVG, LDSGQSFGESAAKEALKETPKGSDVP, LVVQDAPSLSPSRSGSSEKPPANLDLTS, GIFPTSESTHATSKPQKEHSEPTDTGSSGSL, and LPQS…EEVT. Positions 458-487 form a coiled coil; that stretch reads EQDQNQEKKRRRNQGEANKQEATNLLERVL. Basic and acidic residues predominate over residues 649-660; it reads AAEKNHMEKETM. Over residues 809-824 the composition is skewed to basic residues; it reads RFQKPKPNTGRRRRRI. Composition is skewed to basic and acidic residues over residues 873-884, 992-1002, 1009-1041, 1089-1098, 1112-1130, and 1150-1170; these read KDSESDVKDSGR, TGKDLAMKEST, TEEREAYSEETERQEKISALIKDAEEAKARGEM, EGKELNLRET, EKTDIEETNGDPKETERES, and DLGKPEKIDVAPREREPEEHS. Polar residues-rich tracts occupy residues 1180-1200, 1251-1265, 1318-1330, and 1364-1382; these read LSSSDGSTGSPQDKVNISSKI, DTNLSKPLPQEQQPL, DSDQAALSPQHNV, and PPNSSEPKEGSQLTPNQEN. Basic and acidic residues-rich tracts occupy residues 1429 to 1448, 1536 to 1561, and 1592 to 1603; these read QIVEKGEARDIAKNEGPELQ, RRKDEQPGVEKGRTDESTALTAEDHL, and IHSEESGSDRND. Composition is skewed to polar residues over residues 1621–1642 and 1650–1665; these read EQPTSLGLEEQSLSKQIRSSCP and YPKTVSSRRTPLSSAS. Positions 1688-1697 are enriched in basic residues; the sequence is RGSKRIRGKT. 3 stretches are compositionally biased toward basic and acidic residues: residues 1902 to 1913, 1977 to 1996, and 2068 to 2078; these read IVSKEQSNRDAA, IQRETEGDDSKAVELEDKSH, and AAKEALKETPK. The span at 2185 to 2199 shows a compositional bias: low complexity; that stretch reads PSLSPSRSGSSEKPP. Composition is skewed to polar residues over residues 2262–2273, 2319–2334, and 2414–2429; these read FPTSESTHATSK, PASNSEQRDIVTSSSK, and TAGSPESSAAQVSSDQ.

In terms of assembly, component of TFIIIB complex. The TFIIIB complex has two activities, alpha and beta. The TFIIIB-alpha and TFIIIB-beta activities are required for transcription of genes with TFIIIC-bound internal promoters and PSE transcription factor-bound external promoters, respectively. The TFIIIB-alpha activity complex is composed of TBP, BDP1, and a complex containing both BRF2 and at least four stably associated proteins; YY1 facilitates the formation of TFIIIB-alpha activity complex. The TFIIIB-beta activity complex is composed of TBP, BDP1, and BRF1. Interacts with BRF1; this interaction diminishes during mitosis resulting in the release of BDP1 from chromosomal templates. Component of TFIIIC complex. The TFIIIC complex has two activities, C1 and C2. The TFIIIC2 activity complex is only required for transcription of the 'classical' pol III genes whereas the TFIIIC1 activity complex is required for transcription of all pol III genes. The TFIIIC1 activity complex is composed at least of BDP1. Interacts with ZBTB43. Post-translationally, phosphorylated by CSNK2A1 during mitosis, resulting in its release from chromatin and suppression of polymerase III transcription. Expressed in the cochlea, particularly in the spiral ligament, the capillaries of the stria vascularis and the basilar membrane.

It is found in the nucleus. In terms of biological role, general activator of RNA polymerase III transcription. Requires for transcription from all three types of polymerase III promoters. Requires for transcription of genes with internal promoter elements and with promoter elements upstream of the initiation site. The protein is Transcription factor TFIIIB component B'' homolog (Bdp1) of Mus musculus (Mouse).